Here is a 609-residue protein sequence, read N- to C-terminus: mRNA cap guanine-N(7) methyltransferase (609 aa).

Residues 1-10 show a composition bias toward basic and acidic residues; that stretch reads MASKEEERTG. Positions 1-252 are disordered; that stretch reads MASKEEERTG…EEDAMRNSQS (252 aa). Low complexity-rich tracts occupy residues 28–47 and 70–87; these read QPVV…ATPT and PQTT…QQKQ. A compositionally biased stretch (basic and acidic residues) spans 148 to 163; it reads ANDRPISKRKRLEERH. A compositionally biased stretch (pro residues) spans 193-205; it reads PRSPSPPLPPRSP. Residues 233–247 show a composition bias toward basic and acidic residues; sequence RRQEERERALEEDAM. In terms of domain architecture, mRNA cap 0 methyltransferase spans 278–590; sequence SKIKGLRSFN…KYTPLGFTSA (313 aa). Residue 287–288 participates in mRNA binding; sequence NN. Residues Lys291, Gly314, Asp338, Asp379, 422–424, and Tyr427 contribute to the S-adenosyl-L-methionine site; that span reads MFA.

This sequence belongs to the class I-like SAM-binding methyltransferase superfamily. mRNA cap 0 methyltransferase family.

It is found in the nucleus. The catalysed reaction is a 5'-end (5'-triphosphoguanosine)-ribonucleoside in mRNA + S-adenosyl-L-methionine = a 5'-end (N(7)-methyl 5'-triphosphoguanosine)-ribonucleoside in mRNA + S-adenosyl-L-homocysteine. Its function is as follows. Responsible for methylating the 5'-cap structure of mRNAs. The polypeptide is mRNA cap guanine-N(7) methyltransferase (abd1) (Aspergillus niger (strain ATCC MYA-4892 / CBS 513.88 / FGSC A1513)).